The primary structure comprises 170 residues: Protein ripply3 (170 aa).

Residues 40–43 (WRPW) carry the WRPW motif motif. Residues 51–61 (ELDGQQRRSGE) show a composition bias toward basic and acidic residues. Residues 51–78 (ELDGQQRRSGEADGVPTNTGPKGALGFQ) form a disordered region. The ripply homology domain stretch occupies residues 79 to 114 (HPVRLYMPKSKTSEYLQHMGRKVLASFPVQATIHFY). Polar residues predominate over residues 142 to 155 (GVDSSRGSSDNYSV). The segment at 142-170 (GVDSSRGSSDNYSVQGGPKRNIGSHAGSA) is disordered.

Belongs to the ripply family. As to quaternary structure, interacts with tbx1 and tle4/grg4. As to expression, at neurula stage, expressed in the region close to the heart mesoderm. At the tailbud stage, expressed in the pharyngeal region.

It is found in the nucleus. Acts as a transcriptional corepressor. Negative regulator of the transcriptional activity of tbx1 that plays a key role in pharyngeal development. Plays a role in the formation of the anteroposterior (AP) axis during embryonic development; required to establish the posterolateral border of the pre-placodal ectoderm (PPE) acting downstream of the retinoic acid receptor (RAR) signaling. The chain is Protein ripply3 (ripply3) from Xenopus laevis (African clawed frog).